The primary structure comprises 445 residues: Argininosuccinate synthase (445 aa).

ATP-binding positions include 17-25 (AFSGGLDTS) and Ala-43. Position 99 (Tyr-99) interacts with L-citrulline. The ATP site is built by Gly-129 and Thr-131. 3 residues coordinate L-aspartate: Thr-131, Asn-135, and Asp-136. Residue Asn-135 participates in L-citrulline binding. Asp-136 is an ATP binding site. L-citrulline contacts are provided by Arg-139 and Ser-192. Asp-194 serves as a coordination point for ATP. Residues Thr-201, Glu-203, and Glu-280 each contribute to the L-citrulline site.

The protein belongs to the argininosuccinate synthase family. Type 2 subfamily. Homotetramer.

Its subcellular location is the cytoplasm. It catalyses the reaction L-citrulline + L-aspartate + ATP = 2-(N(omega)-L-arginino)succinate + AMP + diphosphate + H(+). The protein operates within amino-acid biosynthesis; L-arginine biosynthesis; L-arginine from L-ornithine and carbamoyl phosphate: step 2/3. The sequence is that of Argininosuccinate synthase from Bradyrhizobium sp. (strain BTAi1 / ATCC BAA-1182).